The primary structure comprises 1254 residues: DNA polymerase gamma (1254 aa).

The segment covering 1125 to 1137 has biased composition (basic and acidic residues); sequence RKKENRIDDENKK. Disordered regions lie at residues 1125 to 1145 and 1202 to 1240; these read RKKE…KKNT and YKKK…TNRN. A compositionally biased stretch (polar residues) spans 1208 to 1217; it reads QARTASSSPI. Residues 1219-1231 show a composition bias toward basic residues; that stretch reads KTAKAVHSKKLPA.

It belongs to the DNA polymerase type-A family. It depends on Mg(2+) as a cofactor.

Its subcellular location is the mitochondrion. It carries out the reaction DNA(n) + a 2'-deoxyribonucleoside 5'-triphosphate = DNA(n+1) + diphosphate. Functionally, involved in the replication of mitochondrial DNA. This Saccharomyces cerevisiae (strain ATCC 204508 / S288c) (Baker's yeast) protein is DNA polymerase gamma (MIP1).